The primary structure comprises 329 residues: Isopenicillin N synthase (329 aa).

Residues R87, Y91, S183, and Y189 each contribute to the isopenicillin N site. The N-[(5S)-5-amino-5-carboxypentanoyl]-L-cysteinyl-D-valine site is built by R87, Y91, S183, Y189, H212, and D214. A Fe2OG dioxygenase domain is found at 180–286 (SLSSVSLIRY…RLSLPFFLNG (107 aa)). Fe(2+) contacts are provided by H212, D214, and H268. R277 provides a ligand contact to 2-oxoglutarate. Position 279 (S279) interacts with isopenicillin N. S279 is an N-[(5S)-5-amino-5-carboxypentanoyl]-L-cysteinyl-D-valine binding site.

This sequence belongs to the iron/ascorbate-dependent oxidoreductase family. Requires Fe cation as cofactor. The cofactor is L-ascorbate.

The enzyme catalyses N-[(5S)-5-amino-5-carboxypentanoyl]-L-cysteinyl-D-valine + O2 = isopenicillin N + 2 H2O. Its pathway is antibiotic biosynthesis; penicillin G biosynthesis; penicillin G from L-alpha-aminoadipate and L-cysteine and L-valine: step 2/3. In terms of biological role, removes, in the presence of oxygen, 4 hydrogen atoms from delta-L-(alpha-aminoadipyl)-L-cysteinyl-D-valine (ACV) to form the azetidinone and thiazolidine rings of isopenicillin. The chain is Isopenicillin N synthase (pcbC) from Streptomyces clavuligerus.